A 345-amino-acid polypeptide reads, in one-letter code: Probable branched-chain amino acid transport permease protein LivM (345 aa).

8 consecutive transmembrane segments (helical) span residues 3–23 (IDLI…SLSL), 42–62 (LVGA…YFGI), 91–111 (ILIL…AIFI), 124–144 (ITLL…LNII), 163–183 (YRGW…YLFF), 222–242 (IGSA…VNII), 269–289 (GVAL…IYKY), and 297–317 (IPFE…LLIL).

This sequence belongs to the binding-protein-dependent transport system permease family. LivHM subfamily.

It is found in the cell membrane. Functionally, part of the binding-protein-dependent transport system for branched-chain amino acids. Probably responsible for the translocation of the substrates across the membrane. The chain is Probable branched-chain amino acid transport permease protein LivM (livM) from Methanocaldococcus jannaschii (strain ATCC 43067 / DSM 2661 / JAL-1 / JCM 10045 / NBRC 100440) (Methanococcus jannaschii).